Consider the following 576-residue polypeptide: Arginine--tRNA ligase (576 aa).

Positions Pro-122–His-132 match the 'HIGH' region motif.

The protein belongs to the class-I aminoacyl-tRNA synthetase family. As to quaternary structure, monomer.

The protein localises to the cytoplasm. The enzyme catalyses tRNA(Arg) + L-arginine + ATP = L-arginyl-tRNA(Arg) + AMP + diphosphate. The protein is Arginine--tRNA ligase of Yersinia pseudotuberculosis serotype I (strain IP32953).